The following is a 541-amino-acid chain: MTVMEHTKAAQIDLTKHGLTGVTEVLRNPSYEQLFVEETLPGLEGYEKGVVTELGSVAVDTGIFTGRSPKDKYIVKDDTTRDTMWWSDQGKNDNKPITTEVWDELKELVTTQLSGKRLFVIDGYCGANPDTRLSVRIITEVAWQAHFVKNMFIRPTDEELATFEPDFVVMNGAKTTNPNWEKQGLNSENFVAFNLTERVQIIGGTWYGGEMKKGMFAMMNYLLPLQGIASMHCSANVGEEGDVAIFFGLSGTGKTTLSTDPKRELIGDDEHGWDDDGIFNFEGGCYAKTIRLSKEAEPEIYNAIRRDALLENVTVRGDGSIDFDDGSKTENTRVSYPIHHIDNIVKPVSKAGHAQKVIFLTADAFGVLPPVSKLTPEQTKYHFLSGFTAKLAGTERGITEPTPTFSAAFGAAFLTLHPTQYAEVLVKRMEAAGAEAYLVNTGWNGTGKRISIQDTRGIIDAILDGSIDQAETKVIPMFNLEVPLALHDVDPAILDPRDTYTDPLQWESKAKDLAERFINNFDKYTDNAEGKSLVAAGPQLD.

Arg67, Tyr207, and Lys213 together coordinate substrate. Residues Lys213, His232, and 248 to 256 (GLSGTGKTT) contribute to the ATP site. Positions 213 and 232 each coordinate Mn(2+). Asp269 lines the Mn(2+) pocket. ATP-binding positions include Glu297, Arg333, 449–450 (RI), and Thr455. Arg333 lines the substrate pocket.

It belongs to the phosphoenolpyruvate carboxykinase (ATP) family. Monomer. Mn(2+) is required as a cofactor.

It localises to the cytoplasm. The catalysed reaction is oxaloacetate + ATP = phosphoenolpyruvate + ADP + CO2. It participates in carbohydrate biosynthesis; gluconeogenesis. In terms of biological role, involved in the gluconeogenesis. Catalyzes the conversion of oxaloacetate (OAA) to phosphoenolpyruvate (PEP) through direct phosphoryl transfer between the nucleoside triphosphate and OAA. The sequence is that of Phosphoenolpyruvate carboxykinase (ATP) from Vibrio atlanticus (strain LGP32) (Vibrio splendidus (strain Mel32)).